Here is a 129-residue protein sequence, read N- to C-terminus: Small ribosomal subunit protein uS9 (129 aa).

The protein belongs to the universal ribosomal protein uS9 family.

The chain is Small ribosomal subunit protein uS9 from Nitratiruptor sp. (strain SB155-2).